The sequence spans 223 residues: Ribose-5-phosphate isomerase A (223 aa).

Residues 29-32 (TGST), 82-85 (DGAD), and 95-98 (KGGG) each bind substrate. The Proton acceptor role is filled by Glu104. A substrate-binding site is contributed by Lys122.

Belongs to the ribose 5-phosphate isomerase family. As to quaternary structure, homodimer.

It catalyses the reaction aldehydo-D-ribose 5-phosphate = D-ribulose 5-phosphate. It participates in carbohydrate degradation; pentose phosphate pathway; D-ribose 5-phosphate from D-ribulose 5-phosphate (non-oxidative stage): step 1/1. Functionally, catalyzes the reversible conversion of ribose-5-phosphate to ribulose 5-phosphate. The chain is Ribose-5-phosphate isomerase A from Neisseria meningitidis serogroup B (strain ATCC BAA-335 / MC58).